Consider the following 100-residue polypeptide: Aspartyl/glutamyl-tRNA(Asn/Gln) amidotransferase subunit C (100 aa).

The protein belongs to the GatC family. Heterotrimer of A, B and C subunits.

It carries out the reaction L-glutamyl-tRNA(Gln) + L-glutamine + ATP + H2O = L-glutaminyl-tRNA(Gln) + L-glutamate + ADP + phosphate + H(+). The enzyme catalyses L-aspartyl-tRNA(Asn) + L-glutamine + ATP + H2O = L-asparaginyl-tRNA(Asn) + L-glutamate + ADP + phosphate + 2 H(+). In terms of biological role, allows the formation of correctly charged Asn-tRNA(Asn) or Gln-tRNA(Gln) through the transamidation of misacylated Asp-tRNA(Asn) or Glu-tRNA(Gln) in organisms which lack either or both of asparaginyl-tRNA or glutaminyl-tRNA synthetases. The reaction takes place in the presence of glutamine and ATP through an activated phospho-Asp-tRNA(Asn) or phospho-Glu-tRNA(Gln). In Streptococcus thermophilus (strain ATCC BAA-491 / LMD-9), this protein is Aspartyl/glutamyl-tRNA(Asn/Gln) amidotransferase subunit C.